We begin with the raw amino-acid sequence, 201 residues long: Ribosome maturation factor RimP (201 aa).

The disordered stretch occupies residues 180 to 201; the sequence is LRRGSAPAQDEEGEDEAPGAPL. A compositionally biased stretch (acidic residues) spans 188–201; the sequence is QDEEGEDEAPGAPL.

The protein belongs to the RimP family.

It localises to the cytoplasm. In terms of biological role, required for maturation of 30S ribosomal subunits. The chain is Ribosome maturation factor RimP from Methylobacterium sp. (strain 4-46).